Here is a 690-residue protein sequence, read N- to C-terminus: Elongation factor G (690 aa).

Residues serine 8–asparagine 283 enclose the tr-type G domain. GTP contacts are provided by residues alanine 17–threonine 24, aspartate 81–histidine 85, and asparagine 135–aspartate 138.

It belongs to the TRAFAC class translation factor GTPase superfamily. Classic translation factor GTPase family. EF-G/EF-2 subfamily.

The protein localises to the cytoplasm. In terms of biological role, catalyzes the GTP-dependent ribosomal translocation step during translation elongation. During this step, the ribosome changes from the pre-translocational (PRE) to the post-translocational (POST) state as the newly formed A-site-bound peptidyl-tRNA and P-site-bound deacylated tRNA move to the P and E sites, respectively. Catalyzes the coordinated movement of the two tRNA molecules, the mRNA and conformational changes in the ribosome. This Ehrlichia canis (strain Jake) protein is Elongation factor G.